The sequence spans 330 residues: tRNA uridine(34) hydroxylase (330 aa).

Residues 123–217 form the Rhodanese domain; it reads SDPEVILVDT…YLEEVKQEES (95 aa). Catalysis depends on Cys-177, which acts as the Cysteine persulfide intermediate.

It belongs to the TrhO family.

The enzyme catalyses uridine(34) in tRNA + AH2 + O2 = 5-hydroxyuridine(34) in tRNA + A + H2O. In terms of biological role, catalyzes oxygen-dependent 5-hydroxyuridine (ho5U) modification at position 34 in tRNAs. This is tRNA uridine(34) hydroxylase from Shewanella sp. (strain ANA-3).